The following is a 329-amino-acid chain: Cytoplasmic phosphatidylinositol transfer protein 1 (329 aa).

Residues 267–329 (SHGGYSSAPS…GNKPSLAKPE (63 aa)) are disordered.

This sequence belongs to the PtdIns transfer protein family. PI transfer class IIB subfamily.

Its subcellular location is the cytoplasm. It catalyses the reaction a 1,2-diacyl-sn-glycero-3-phospho-(1D-myo-inositol)(in) = a 1,2-diacyl-sn-glycero-3-phospho-(1D-myo-inositol)(out). The catalysed reaction is a 1,2-diacyl-sn-glycero-3-phosphate(in) = a 1,2-diacyl-sn-glycero-3-phosphate(out). Functionally, catalyzes the transfer of phosphatidylinositol (PI) and phosphatidic acid (PA) between membranes. Binds PA derived from the phospholipase D signaling pathway and among the cellular PA species, preferably binds to the C16:0/16:1 and C16:1/18:1 PA species. This is Cytoplasmic phosphatidylinositol transfer protein 1 (pitpnc1) from Xenopus tropicalis (Western clawed frog).